Here is a 440-residue protein sequence, read N- to C-terminus: Enolase (440 aa).

Gln168 is a binding site for (2R)-2-phosphoglycerate. The active-site Proton donor is Glu210. 3 residues coordinate Mg(2+): Asp249, Glu300, and Asp326. Residues Lys351, Arg380, Ser381, and Lys402 each contribute to the (2R)-2-phosphoglycerate site. Catalysis depends on Lys351, which acts as the Proton acceptor.

The protein belongs to the enolase family. The cofactor is Mg(2+).

The protein localises to the cytoplasm. It localises to the secreted. The protein resides in the cell surface. The enzyme catalyses (2R)-2-phosphoglycerate = phosphoenolpyruvate + H2O. Its pathway is carbohydrate degradation; glycolysis; pyruvate from D-glyceraldehyde 3-phosphate: step 4/5. Its function is as follows. Catalyzes the reversible conversion of 2-phosphoglycerate (2-PG) into phosphoenolpyruvate (PEP). It is essential for the degradation of carbohydrates via glycolysis. This Ureaplasma parvum serovar 3 (strain ATCC 27815 / 27 / NCTC 11736) protein is Enolase.